The following is a 467-amino-acid chain: Cysteine--tRNA ligase (467 aa).

Cys-28 is a binding site for Zn(2+). The 'HIGH' region motif lies at 30-40; that stretch reads MTVYDHCHLGH. Zn(2+)-binding residues include Cys-209, His-234, and Glu-238. A 'KMSKS' region motif is present at residues 266 to 270; that stretch reads KMSKS. Residue Lys-269 coordinates ATP.

Belongs to the class-I aminoacyl-tRNA synthetase family. Monomer. The cofactor is Zn(2+).

It localises to the cytoplasm. The catalysed reaction is tRNA(Cys) + L-cysteine + ATP = L-cysteinyl-tRNA(Cys) + AMP + diphosphate. This is Cysteine--tRNA ligase from Nitrosomonas eutropha (strain DSM 101675 / C91 / Nm57).